Consider the following 374-residue polypeptide: MMKRNILAVVIPALLAAGAANAAEIYNKDGNKLDLYGKVDGLHYFSKDKGNDGDQTYVRFGFKGETQITDQLTGYGQWEYNVQSNHAESQGTEGTKTRLGFAGLKFADYGSFDYGRNYGVLYDVEGWTDMLPEFGGDTYTYSDNFMTGRTNGVATYRNNNFFGLVDGLNFALQYQGKNQNDGRDVKKQNGDGWGISSTYDIGEGVSFGAAYASSNRTDDQKLRSNERGDKADAWTVGAKYDANNVYLAAMYAETRNMTPFGGGNFTNTCAATENCGGFASKTQNFEVTAQYQFDFGLRPEVSYLQSKGKNLNVPGVGSDQDLVKYVSVGTTYYFNKNMSTYVDYKINLLDDNDFTKATGIATDDIVGVGLVYQF.

Residues 1–21 (MMKRNILAVVIPALLAAGAAN) form the signal peptide. Residues 22–27 (AAEIYN) traverse the membrane as a beta stranded segment. Residue Lys-28 is a topological domain, periplasmic. The beta stranded transmembrane segment at 29 to 44 (DGNKLDLYGKVDGLHY) threads the bilayer. Over 45 to 55 (FSKDKGNDGDQ) the chain is Extracellular. Residues 56 to 68 (TYVRFGFKGETQI) traverse the membrane as a beta stranded segment. The Periplasmic segment spans residues 69–70 (TD). The chain crosses the membrane as a beta stranded span at residues 71-83 (QLTGYGQWEYNVQ). At 84 to 97 (SNHAESQGTEGTKT) the chain is on the extracellular side. The chain crosses the membrane as a beta stranded span at residues 98–107 (RLGFAGLKFA). The Periplasmic portion of the chain corresponds to 108 to 110 (DYG). Residues 111–116 (SFDYGR) traverse the membrane as a beta stranded segment. The Extracellular segment spans residues 117–151 (NYGVLYDVEGWTDMLPEFGGDTYTYSDNFMTGRTN). The beta stranded transmembrane segment at 152–158 (GVATYRN) threads the bilayer. Residues 159 to 166 (NNFFGLVD) lie on the Periplasmic side of the membrane. Residues 167 to 178 (GLNFALQYQGKN) form a beta stranded membrane-spanning segment. The Extracellular segment spans residues 179-190 (QNDGRDVKKQNG). The chain crosses the membrane as a beta stranded span at residues 191–201 (DGWGISSTYDI). The Periplasmic segment spans residues 202–203 (GE). A beta stranded membrane pass occupies residues 204-216 (GVSFGAAYASSNR). The Extracellular segment spans residues 217–230 (TDDQKLRSNERGDK). The beta stranded transmembrane segment at 231–242 (ADAWTVGAKYDA) threads the bilayer. Asn-243 is a topological domain (periplasmic). A beta stranded membrane pass occupies residues 244 to 255 (NVYLAAMYAETR). The Extracellular portion of the chain corresponds to 256–280 (NMTPFGGGNFTNTCAATENCGGFAS). Residues 281–293 (KTQNFEVTAQYQF) traverse the membrane as a beta stranded segment. Over 294-295 (DF) the chain is Periplasmic. A beta stranded transmembrane segment spans residues 296-309 (GLRPEVSYLQSKGK). At 310–322 (NLNVPGVGSDQDL) the chain is on the extracellular side. The chain crosses the membrane as a beta stranded span at residues 323–334 (VKYVSVGTTYYF). Residues 335–336 (NK) lie on the Periplasmic side of the membrane. A beta stranded membrane pass occupies residues 337–346 (NMSTYVDYKI). Residues 347-364 (NLLDDNDFTKATGIATDD) are Extracellular-facing. The chain crosses the membrane as a beta stranded span at residues 365–374 (IVGVGLVYQF).

It belongs to the Gram-negative porin family. Homotrimer.

The protein localises to the cell outer membrane. Its function is as follows. Forms pores that allow passive diffusion of small molecules across the outer membrane. The polypeptide is Outer membrane protein F (ompF) (Serratia marcescens).